Consider the following 416-residue polypeptide: Homeobox protein ceh-62 (416 aa).

Over residues 103-113 the composition is skewed to low complexity; the sequence is TPTPIIATPSI. 2 disordered regions span residues 103–144 and 178–247; these read TPTP…QATR and FQNR…FPPT. The segment covering 118-127 has biased composition (polar residues); that stretch reads QPLQSPSAPN. The segment at residues 130-189 is a DNA-binding region (homeobox); sequence SRRKRTTFSPEQATRLEAEYIGDSYMAREKRHLLAQSLKLSENQVKTWFQNRRAKDKRDR. The span at 193 to 218 shows a compositional bias: low complexity; the sequence is NASNHTSNSRRSSPSRKSSSDSTPTP. Positions 219–240 are enriched in polar residues; the sequence is TQATQFDMPTQIQTASPPTTAD.

The protein resides in the nucleus. The protein is Homeobox protein ceh-62 of Caenorhabditis elegans.